A 307-amino-acid chain; its full sequence is ATP synthase gamma chain (307 aa).

This sequence belongs to the ATPase gamma chain family. As to quaternary structure, F-type ATPases have 2 components, CF(1) - the catalytic core - and CF(0) - the membrane proton channel. CF(1) has five subunits: alpha(3), beta(3), gamma(1), delta(1), epsilon(1). CF(0) has three main subunits: a, b and c.

The protein localises to the cell membrane. Produces ATP from ADP in the presence of a proton gradient across the membrane. The gamma chain is believed to be important in regulating ATPase activity and the flow of protons through the CF(0) complex. The sequence is that of ATP synthase gamma chain from Bifidobacterium longum (strain DJO10A).